The following is a 285-amino-acid chain: Complex I assembly factor TIMMDC1, mitochondrial (285 aa).

A run of 4 helical transmembrane segments spans residues 80-100 (AAVS…FIYA), 137-159 (RWSW…LTVY), 165-185 (MSHF…NLGV), and 188-208 (LVAG…LLMA). Residues 265–285 (RIEELLSLPRNPSSPHQQSKH) are disordered. Residues 274–285 (RNPSSPHQQSKH) show a composition bias toward polar residues. Residue Ser-277 is modified to Phosphoserine.

Belongs to the Tim17/Tim22/Tim23 family. In terms of assembly, associates with the intermediate 315 kDa subcomplex of incompletely assembled complex I. Interacts with TMEM70.

The protein resides in the mitochondrion membrane. Chaperone protein involved in the assembly of the mitochondrial NADH:ubiquinone oxidoreductase complex (complex I). Participates in constructing the membrane arm of complex I. This Mus musculus (Mouse) protein is Complex I assembly factor TIMMDC1, mitochondrial.